Consider the following 827-residue polypeptide: Copper-transporting ATPase 2 (827 aa).

HMA domains lie at 15-80 and 82-148; these read VSTN…YAPR and ATEE…YELR. Cu cation contacts are provided by Cys-26, Cys-29, Cys-93, and Cys-96. 6 helical membrane passes run 174 to 194, 210 to 230, 246 to 266, 271 to 291, 430 to 450, and 458 to 478; these read VTIS…SHFI, NLYL…LRFF, SLVV…TFVP, SGTA…VLLG, GWFV…WYTF, and FALV…MGLA. Residue Asp-515 is the 4-aspartylphosphate intermediate of the active site. Mg(2+) is bound by residues Asp-714 and Asp-718. 2 consecutive transmembrane segments (helical) span residues 771–793 and 797–819; these read NLFW…LYPV and LLSP…GNAL.

The protein belongs to the cation transport ATPase (P-type) (TC 3.A.3) family. Type IB subfamily.

It is found in the cell membrane. It catalyses the reaction Cu(2+)(in) + ATP + H2O = Cu(2+)(out) + ADP + phosphate + H(+). Its function is as follows. Involved in copper transport. This chain is Copper-transporting ATPase 2 (actP2), found in Rhizobium meliloti (strain 1021) (Ensifer meliloti).